Reading from the N-terminus, the 506-residue chain is Histidine ammonia-lyase (506 aa).

Positions 143 to 145 (ASG) form a cross-link, 5-imidazolinone (Ala-Gly). Residue S144 is modified to 2,3-didehydroalanine (Ser).

Belongs to the PAL/histidase family. In terms of processing, contains an active site 4-methylidene-imidazol-5-one (MIO), which is formed autocatalytically by cyclization and dehydration of residues Ala-Ser-Gly.

It is found in the cytoplasm. It catalyses the reaction L-histidine = trans-urocanate + NH4(+). Its pathway is amino-acid degradation; L-histidine degradation into L-glutamate; N-formimidoyl-L-glutamate from L-histidine: step 1/3. This chain is Histidine ammonia-lyase, found in Salmonella paratyphi B (strain ATCC BAA-1250 / SPB7).